We begin with the raw amino-acid sequence, 189 residues long: NADH-quinone oxidoreductase subunit B (189 aa).

[4Fe-4S] cluster-binding residues include C39, C40, C104, and C135.

This sequence belongs to the complex I 20 kDa subunit family. As to quaternary structure, NDH-1 is composed of 14 different subunits. Subunits NuoB, C, D, E, F, and G constitute the peripheral sector of the complex. [4Fe-4S] cluster serves as cofactor.

Its subcellular location is the cell inner membrane. It carries out the reaction a quinone + NADH + 5 H(+)(in) = a quinol + NAD(+) + 4 H(+)(out). NDH-1 shuttles electrons from NADH, via FMN and iron-sulfur (Fe-S) centers, to quinones in the respiratory chain. The immediate electron acceptor for the enzyme in this species is believed to be a menaquinone. Couples the redox reaction to proton translocation (for every two electrons transferred, four hydrogen ions are translocated across the cytoplasmic membrane), and thus conserves the redox energy in a proton gradient. The polypeptide is NADH-quinone oxidoreductase subunit B (Chlorobium limicola (strain DSM 245 / NBRC 103803 / 6330)).